Consider the following 304-residue polypeptide: Porphobilinogen deaminase (304 aa).

Residue cysteine 240 is modified to S-(dipyrrolylmethanemethyl)cysteine.

Belongs to the HMBS family. Monomer. It depends on dipyrromethane as a cofactor.

It carries out the reaction 4 porphobilinogen + H2O = hydroxymethylbilane + 4 NH4(+). The protein operates within porphyrin-containing compound metabolism; protoporphyrin-IX biosynthesis; coproporphyrinogen-III from 5-aminolevulinate: step 2/4. Its function is as follows. Tetrapolymerization of the monopyrrole PBG into the hydroxymethylbilane pre-uroporphyrinogen in several discrete steps. The polypeptide is Porphobilinogen deaminase (Xanthomonas campestris pv. campestris (strain B100)).